The following is a 101-amino-acid chain: Urease subunit beta 1 (101 aa).

It belongs to the urease beta subunit family. Heterotrimer of UreA (gamma), UreB (beta) and UreC (alpha) subunits. Three heterotrimers associate to form the active enzyme.

The protein resides in the cytoplasm. The enzyme catalyses urea + 2 H2O + H(+) = hydrogencarbonate + 2 NH4(+). It functions in the pathway nitrogen metabolism; urea degradation; CO(2) and NH(3) from urea (urease route): step 1/1. Functionally, disruption of the ure1 gene cluster suggests that it protects brucellae during their passage through the stomach. The major route of infection in human brucellosis is oral. This chain is Urease subunit beta 1, found in Brucella abortus (strain 2308).